The chain runs to 451 residues: POU domain, class 3, transcription factor 1 (451 aa).

Disordered stretches follow at residues 1 to 21 (MATT…GTGP), 69 to 114 (AHPQ…GFHA), 134 to 154 (AHHL…HQPQ), 186 to 253 (GLHH…PSSD), and 395 to 451 (KRMT…GSVQ). Composition is skewed to gly residues over residues 11 to 20 (GPGGGAGGTG), 76 to 85 (TGGGGGGDWA), and 95 to 112 (AGGG…GGGF). The span at 134–145 (AHHLGPAMSPSP) shows a compositional bias: low complexity. Basic and acidic residues predominate over residues 190-199 (ALHEDGHEAQ). A compositionally biased stretch (low complexity) spans 220-232 (AGGLHAAAAHLHP). The 75-residue stretch at 247–321 (EDAPSSDDLE…LLNKWLEETD (75 aa)) folds into the POU-specific domain. Positions 339–398 (KRKKRTSIEVGVKGALESHFLKCPKPSAHEITGLADSLQLEKEVVRVWFCNRRQKEKRMT) form a DNA-binding region, homeobox. The segment covering 427 to 436 (PSAPPPPPPA) has biased composition (pro residues).

It belongs to the POU transcription factor family. Class-3 subfamily. In terms of tissue distribution, neural tissues and testis.

It is found in the nucleus. Transcription factor that binds to the octamer motif (5'-ATTTGCAT-3'). Acts as a transcriptional activator when binding cooperatively with SOX4, SOX11, or SOX12 to gene promoters. Acts as a transcriptional repressor of myelin-specific genes. The sequence is that of POU domain, class 3, transcription factor 1 (Pou3f1) from Rattus norvegicus (Rat).